A 132-amino-acid chain; its full sequence is Large ribosomal subunit protein bL17 (132 aa).

It belongs to the bacterial ribosomal protein bL17 family. Part of the 50S ribosomal subunit. Contacts protein L32.

In Leptothrix cholodnii (strain ATCC 51168 / LMG 8142 / SP-6) (Leptothrix discophora (strain SP-6)), this protein is Large ribosomal subunit protein bL17.